The chain runs to 187 residues: Abscisic acid receptor PYL9 (187 aa).

The interval histidine 27–glutamate 178 is START-like. Cystine bridges form between cysteine 29/cysteine 159 and cysteine 34/cysteine 159. Abscisate is bound by residues lysine 63, alanine 91–glutamate 96, arginine 118–serine 124, and glutamate 143. Positions serine 87 to alanine 91 match the Gate loop motif. The Latch loop motif lies at histidine 117–leucine 119.

This sequence belongs to the PYR/PYL/RCAR abscisic acid intracellular receptor family. Homodimer. Monomer. Binds ABA on one subunit only. Binds to CARs protein in an ABA-independent manner, both at the plasma membrane and in the nucleus. Binds specifically (+)-ABA but not (-)-ABA. Interacts with HAB1, ABI1 and ABI2, and possibly with other PP2Cs. Interacts with TOPP1. Interacts with DDA1. Expressed in root tips, vascular tissues, stomata, flowers, pollen tubes and developing seeds.

The protein resides in the cytoplasm. It is found in the nucleus. It localises to the cell membrane. Functionally, receptor for abscisic acid (ABA) required for ABA-mediated responses such as stomatal closure and germination inhibition. Inhibits the activity of group-A protein phosphatases type 2C (PP2Cs) in an ABA-independent manner but more efficiently when activated by ABA. Confers enhanced sensitivity to ABA. Can be activated only by (+)-ABA but not by (-)-ABA. The protein is Abscisic acid receptor PYL9 (PYL9) of Arabidopsis thaliana (Mouse-ear cress).